Here is a 125-residue protein sequence, read N- to C-terminus: Ribosome-binding factor A (125 aa).

The protein belongs to the RbfA family. In terms of assembly, monomer. Binds 30S ribosomal subunits, but not 50S ribosomal subunits or 70S ribosomes.

The protein resides in the cytoplasm. In terms of biological role, one of several proteins that assist in the late maturation steps of the functional core of the 30S ribosomal subunit. Associates with free 30S ribosomal subunits (but not with 30S subunits that are part of 70S ribosomes or polysomes). Required for efficient processing of 16S rRNA. May interact with the 5'-terminal helix region of 16S rRNA. In Thermosipho melanesiensis (strain DSM 12029 / CIP 104789 / BI429), this protein is Ribosome-binding factor A.